We begin with the raw amino-acid sequence, 785 residues long: Semaphorin-3E (785 aa).

Residues 1-25 form the signal peptide; it reads MLGRMASAQDLLILALCGLLLELPA. A Sema domain is found at 36–520; sequence RLRLSHKELW…TESVIAQVKF (485 aa). N-linked (GlcNAc...) asparagine glycosylation is present at N48. Cysteines 109 and 119 form a disulfide. N130 is a glycosylation site (N-linked (GlcNAc...) asparagine). 4 cysteine pairs are disulfide-bonded: C137-C146, C274-C386, C298-C346, and C523-C541. N600 carries N-linked (GlcNAc...) asparagine glycosylation. The region spanning 651–740 is the Ig-like C2-type domain; that stretch reads LDAGTYFCQT…EYCEKVWCTD (90 aa). A disulfide bond links C658 and C733. The tract at residues 744-785 is disordered; it reads KKLKMSPSKWKYANPQEKRQDQEKKARIRPEHYRLPRNIADS. The span at 759–777 shows a compositional bias: basic and acidic residues; the sequence is QEKRQDQEKKARIRPEHYR.

The protein belongs to the semaphorin family. As to expression, collapsin-1, -2, -3, and -5 bind to overlapping but distinct axon tracts.

The protein localises to the secreted. In terms of biological role, plays an important role in signaling via the cell surface receptor PLXND1. Mediates reorganization of the actin cytoskeleton, leading to the retraction of cell projections. Promotes focal adhesion disassembly and inhibits adhesion of endothelial cells to the extracellular matrix. Regulates angiogenesis. Can down-regulate sprouting angiogenesis. Required for normal vascular patterning during embryogenesis. Induces the collapse and paralysis of neuronal growth cones. Plays an important role in ensuring the specificity of synapse formation. The chain is Semaphorin-3E (SEMA3E) from Gallus gallus (Chicken).